Here is a 149-residue protein sequence, read N- to C-terminus: Transcription antitermination protein NusB (149 aa).

This sequence belongs to the NusB family.

Its function is as follows. Involved in transcription antitermination. Required for transcription of ribosomal RNA (rRNA) genes. Binds specifically to the boxA antiterminator sequence of the ribosomal RNA (rrn) operons. This is Transcription antitermination protein NusB from Chromobacterium violaceum (strain ATCC 12472 / DSM 30191 / JCM 1249 / CCUG 213 / NBRC 12614 / NCIMB 9131 / NCTC 9757 / MK).